The sequence spans 194 residues: Cysteine and glycine-rich protein 2 (194 aa).

Residues 10–61 form the LIM zinc-binding 1 domain; the sequence is CGACGRTVYHAEEVQCDGRSFHRCCFLCMVCRKNLDSTTVAIHDAEVYCKSC. The Nuclear localization signal signature appears at 64-69; the sequence is KKYGPK. The 52-residue stretch at 120-171 folds into the LIM zinc-binding 2 domain; sequence CSRCGDSVYAAEKVIGAGKPWHKNCFRCAKCGKSLESTTLTEKEGEIYCKGC.

The protein resides in the nucleus. Its function is as follows. Totally down-regulated in transformed cells. May therefore take part in the control of cell growth and differentiation. This is Cysteine and glycine-rich protein 2 (CSRP2) from Gallus gallus (Chicken).